The sequence spans 213 residues: mRNA-decapping protein OPG121 (213 aa).

Glu-16 and Arg-50 together coordinate N(7)-methyl-GTP. One can recognise a Nudix hydrolase domain in the interval 30 to 209; it reads KDTHVFAACI…EYLSYIYNML (180 aa). The Nudix box motif lies at 111 to 132; that stretch reads GKLDKKESIKDCLRRELKEESD. The Mg(2+) site is built by Glu-117, Glu-126, Glu-130, Asp-151, and Glu-183. The Nucleophile role is filled by Glu-126. Asp-151 lines the N(7)-methyl-GTP pocket.

This sequence belongs to the Nudix hydrolase family. Mg(2+) is required as a cofactor. Requires Mn(2+) as cofactor.

It carries out the reaction a 5'-end (N(7)-methyl 5'-triphosphoguanosine)-guanosine in mRNA + H2O = a 5'-end phospho-guanosine in mRNA + N(7)-methyl-GDP + 2 H(+). In terms of biological role, decapping enzyme that remove the protective 5'-cap from both host and viral mRNAs to commit transcripts for decay by the cellular exonuclease XRN1. Accelerates viral and cellular mRNA turnover to eliminate competing host mRNAs and allow stage-specific synthesis of viral proteins. Acceleration of the turnover of cellular transcripts may even promote the shutoff of host protein synthesis. In Homo sapiens (Human), this protein is mRNA-decapping protein OPG121 (OPG121).